Consider the following 141-residue polypeptide: Nucleoside diphosphate kinase (141 aa).

Positions 11, 59, 87, 93, 104, and 114 each coordinate ATP. His117 acts as the Pros-phosphohistidine intermediate in catalysis.

Belongs to the NDK family. In terms of assembly, homotetramer. Mg(2+) is required as a cofactor.

The protein localises to the cytoplasm. The enzyme catalyses a 2'-deoxyribonucleoside 5'-diphosphate + ATP = a 2'-deoxyribonucleoside 5'-triphosphate + ADP. It catalyses the reaction a ribonucleoside 5'-diphosphate + ATP = a ribonucleoside 5'-triphosphate + ADP. Its function is as follows. Major role in the synthesis of nucleoside triphosphates other than ATP. The ATP gamma phosphate is transferred to the NDP beta phosphate via a ping-pong mechanism, using a phosphorylated active-site intermediate. The polypeptide is Nucleoside diphosphate kinase (Burkholderia mallei (strain NCTC 10247)).